The following is a 330-amino-acid chain: Ketol-acid reductoisomerase (NADP(+)) (330 aa).

The region spanning 1–181 (MNIYYEQDAD…GGTKAGVIET (181 aa)) is the KARI N-terminal Rossmann domain. NADP(+)-binding positions include 24–27 (YGSQ), Lys-47, Ser-50, Ser-52, and 82–85 (DQTQ). Residue His-107 is part of the active site. Gly-133 serves as a coordination point for NADP(+). In terms of domain architecture, KARI C-terminal knotted spans 182-327 (SFKDETETDL…AKLRGMMSWL (146 aa)). Asp-190, Glu-194, Glu-226, and Glu-230 together coordinate Mg(2+). Ser-251 contributes to the substrate binding site.

It belongs to the ketol-acid reductoisomerase family. Mg(2+) is required as a cofactor.

The enzyme catalyses (2R)-2,3-dihydroxy-3-methylbutanoate + NADP(+) = (2S)-2-acetolactate + NADPH + H(+). It catalyses the reaction (2R,3R)-2,3-dihydroxy-3-methylpentanoate + NADP(+) = (S)-2-ethyl-2-hydroxy-3-oxobutanoate + NADPH + H(+). It functions in the pathway amino-acid biosynthesis; L-isoleucine biosynthesis; L-isoleucine from 2-oxobutanoate: step 2/4. It participates in amino-acid biosynthesis; L-valine biosynthesis; L-valine from pyruvate: step 2/4. Functionally, involved in the biosynthesis of branched-chain amino acids (BCAA). Catalyzes an alkyl-migration followed by a ketol-acid reduction of (S)-2-acetolactate (S2AL) to yield (R)-2,3-dihydroxy-isovalerate. In the isomerase reaction, S2AL is rearranged via a Mg-dependent methyl migration to produce 3-hydroxy-3-methyl-2-ketobutyrate (HMKB). In the reductase reaction, this 2-ketoacid undergoes a metal-dependent reduction by NADPH to yield (R)-2,3-dihydroxy-isovalerate. This chain is Ketol-acid reductoisomerase (NADP(+)), found in Chlorobaculum tepidum (strain ATCC 49652 / DSM 12025 / NBRC 103806 / TLS) (Chlorobium tepidum).